We begin with the raw amino-acid sequence, 420 residues long: Gamma-glutamyl phosphate reductase (420 aa).

Belongs to the gamma-glutamyl phosphate reductase family.

The protein localises to the cytoplasm. It catalyses the reaction L-glutamate 5-semialdehyde + phosphate + NADP(+) = L-glutamyl 5-phosphate + NADPH + H(+). It functions in the pathway amino-acid biosynthesis; L-proline biosynthesis; L-glutamate 5-semialdehyde from L-glutamate: step 2/2. Functionally, catalyzes the NADPH-dependent reduction of L-glutamate 5-phosphate into L-glutamate 5-semialdehyde and phosphate. The product spontaneously undergoes cyclization to form 1-pyrroline-5-carboxylate. In Laribacter hongkongensis (strain HLHK9), this protein is Gamma-glutamyl phosphate reductase.